Reading from the N-terminus, the 426-residue chain is MLDSKLLRSNLQDVADRLASRGFALDVARIEALEEQRKTVQTRTEQLQAERNARSKSIGQAKQRGEDIAPLMADVERMGNELSSGKAELENIQSELDSILFGIPNLPHESVPVGEDEDGNVEVRRWGTPTAFDFPIKDHVALGETHGWLDFETAAKLSGARFALLRGPIARLHRALAQFMINLHTGEHGYEEAYTPYLVQAPALVGTSQLPKFEEDLFKITREGEADLYLIPTAEVSLTNIVAGEILDAKQLPLKFVAHTPCFRSEAGASGRDTRGMIRQHQFDKVEMVQVVEPSTSMEALEGLTANAEKVLQLLQLPYRVLALCTGDMGFSAVKTYDLEVWVPSQDKYREISSCSNCGDFQARRMQARFRNPETGKPELVHTLNGSGLAVGRTLVAVLENYQQADGSIRVPDVLKPYMGGLEVIG.

Over residues 41-60 (QTRTEQLQAERNARSKSIGQ) the composition is skewed to polar residues. Positions 41–64 (QTRTEQLQAERNARSKSIGQAKQR) are disordered. 233-235 (TAE) serves as a coordination point for L-serine. 264–266 (RSE) lines the ATP pocket. Glutamate 287 provides a ligand contact to L-serine. 351-354 (EISS) lines the ATP pocket. Residue serine 387 participates in L-serine binding.

The protein belongs to the class-II aminoacyl-tRNA synthetase family. Type-1 seryl-tRNA synthetase subfamily. Homodimer. The tRNA molecule binds across the dimer.

The protein resides in the cytoplasm. It carries out the reaction tRNA(Ser) + L-serine + ATP = L-seryl-tRNA(Ser) + AMP + diphosphate + H(+). The enzyme catalyses tRNA(Sec) + L-serine + ATP = L-seryl-tRNA(Sec) + AMP + diphosphate + H(+). The protein operates within aminoacyl-tRNA biosynthesis; selenocysteinyl-tRNA(Sec) biosynthesis; L-seryl-tRNA(Sec) from L-serine and tRNA(Sec): step 1/1. Catalyzes the attachment of serine to tRNA(Ser). Is also able to aminoacylate tRNA(Sec) with serine, to form the misacylated tRNA L-seryl-tRNA(Sec), which will be further converted into selenocysteinyl-tRNA(Sec). The protein is Serine--tRNA ligase of Pseudomonas fluorescens (strain ATCC BAA-477 / NRRL B-23932 / Pf-5).